A 230-amino-acid polypeptide reads, in one-letter code: Uracil-DNA glycosylase (230 aa).

Aspartate 71 (proton acceptor) is an active-site residue.

Belongs to the uracil-DNA glycosylase (UDG) superfamily. UNG family.

The protein localises to the cytoplasm. It catalyses the reaction Hydrolyzes single-stranded DNA or mismatched double-stranded DNA and polynucleotides, releasing free uracil.. Excises uracil residues from the DNA which can arise as a result of misincorporation of dUMP residues by DNA polymerase or due to deamination of cytosine. This chain is Uracil-DNA glycosylase, found in Nocardioides sp. (strain ATCC BAA-499 / JS614).